Here is a 352-residue protein sequence, read N- to C-terminus: MVFRIASSPYTHNQRQTSRIMLLVVIAALPGIAAQTWFFGWGTLFQIVLAAITALVAEAIVLRLRKQSVASHLQDYSALLTGLLLAVSIPPLAPWWMVVLGTGFAIIIAKQLYGGLGQNPFNPAMIGYVVLLISFPVQMTSWLPPYEIAATTPDMLDTLRMIFTGHTASGGDMTLLRIGIDGISQATPLDTFKTSLRAGHSVEQIMQYPIYSGALAGVGWQWVNLAWLVGGVFLLWQKAIRWHIPVSFLLTLALCAALGWLFSPATLASPQLHLLSGATMLGAFFILTDPVTASTTNRGRLIFGALAGVLVWLIRSFGGYPDGVAFAVLLANITVPLIDYYTRPRVYGHRKG.

4 helical membrane passes run 20–40 (IMLL…WFFG), 42–62 (GTLF…AIVL), 69–91 (VASH…SIPP), and 123–143 (PAMI…TSWL). Position 187 is an FMN phosphoryl threonine (Thr187). A run of 5 helical transmembrane segments spans residues 215-235 (LAGV…VFLL), 242-262 (WHIP…GWLF), 267-287 (LASP…FFIL), 301-321 (LIFG…GGYP), and 322-342 (DGVA…DYYT).

Belongs to the NqrB/RnfD family. As to quaternary structure, the complex is composed of six subunits: RsxA, RsxB, RsxC, RsxD, RsxE and RsxG. FMN serves as cofactor.

The protein resides in the cell inner membrane. In terms of biological role, part of a membrane-bound complex that couples electron transfer with translocation of ions across the membrane. Required to maintain the reduced state of SoxR. This Salmonella agona (strain SL483) protein is Ion-translocating oxidoreductase complex subunit D.